Consider the following 743-residue polypeptide: Catalase-peroxidase (743 aa).

Over residues Met1–Gln15 the composition is skewed to polar residues. Residues Met1–Asp40 form a disordered region. Positions Ser16–Pro28 are enriched in low complexity. The segment at residues Trp110–Tyr233 is a cross-link (tryptophyl-tyrosyl-methioninium (Trp-Tyr) (with M-259)). His111 functions as the Proton acceptor in the catalytic mechanism. Positions Tyr233–Met259 form a cross-link, tryptophyl-tyrosyl-methioninium (Tyr-Met) (with W-110). His274 is a binding site for heme b. Positions Asp490–Asn511 are disordered.

It belongs to the peroxidase family. Peroxidase/catalase subfamily. Homodimer or homotetramer. The cofactor is heme b. Formation of the three residue Trp-Tyr-Met cross-link is important for the catalase, but not the peroxidase activity of the enzyme.

The catalysed reaction is H2O2 + AH2 = A + 2 H2O. It catalyses the reaction 2 H2O2 = O2 + 2 H2O. In terms of biological role, bifunctional enzyme with both catalase and broad-spectrum peroxidase activity. This Mycobacterium marinum (strain ATCC BAA-535 / M) protein is Catalase-peroxidase.